A 38-amino-acid chain; its full sequence is Large ribosomal subunit protein bL36 (38 aa).

It belongs to the bacterial ribosomal protein bL36 family.

The chain is Large ribosomal subunit protein bL36 from Cupriavidus metallidurans (strain ATCC 43123 / DSM 2839 / NBRC 102507 / CH34) (Ralstonia metallidurans).